We begin with the raw amino-acid sequence, 491 residues long: Probable allantoate deiminase (491 aa).

Residues 1–32 form the signal peptide; sequence MALLLSYPRRHPSIHLLILSAYALFLLPILDG. N-linked (GlcNAc...) asparagine glycosylation occurs at N109. 4 residues coordinate Mn(2+): H120, D131, E168, and H234. N265 and N343 each carry an N-linked (GlcNAc...) asparagine glycan. H454 lines the Mn(2+) pocket.

This sequence belongs to the peptidase M20A family. Homodimer. The cofactor is Mn(2+).

The protein resides in the endoplasmic reticulum. It carries out the reaction allantoate + H2O + 2 H(+) = (S)-2-ureidoglycine + NH4(+) + CO2. In terms of biological role, involved in the catabolism of purine nucleotides. The sequential activity of AAH, UGLYAH and UAH allows a complete purine breakdown without the intermediate generation of urea. The sequence is that of Probable allantoate deiminase from Oryza sativa subsp. japonica (Rice).